A 197-amino-acid chain; its full sequence is Adenylate kinase (197 aa).

19–24 (GSGKGT) contributes to the ATP binding site. An NMP region spans residues 39–68 (SSGDLLRAEVQSGSPKGKELKAMMERGELV). AMP contacts are provided by residues S40, R45, 66–68 (ELV), 95–98 (RYPR), and Q102. The segment at 132 to 142 (KRAETSNRVDD) is LID. Residue R133 participates in ATP binding. Positions 139 and 150 each coordinate AMP. G178 is a binding site for ATP.

It belongs to the adenylate kinase family. In terms of assembly, monomer.

The protein resides in the cytoplasm. It carries out the reaction AMP + ATP = 2 ADP. Its function is as follows. Catalyzes the reversible transfer of the terminal phosphate group between ATP and AMP. Plays an important role in cellular energy homeostasis and in adenine nucleotide metabolism. This is Adenylate kinase from Schistosoma mansoni (Blood fluke).